The primary structure comprises 1377 residues: DNA-directed RNA polymerase subunit beta (1377 aa).

It belongs to the RNA polymerase beta chain family. The RNAP catalytic core consists of 2 alpha, 1 beta, 1 beta' and 1 omega subunit. When a sigma factor is associated with the core the holoenzyme is formed, which can initiate transcription.

It catalyses the reaction RNA(n) + a ribonucleoside 5'-triphosphate = RNA(n+1) + diphosphate. Functionally, DNA-dependent RNA polymerase catalyzes the transcription of DNA into RNA using the four ribonucleoside triphosphates as substrates. The protein is DNA-directed RNA polymerase subunit beta of Brucella suis biovar 1 (strain 1330).